Here is a 127-residue protein sequence, read N- to C-terminus: Large ribosomal subunit protein bL12 (127 aa).

Positions 98–127 are disordered; the sequence is PKPVKNGVSKEEAEEAKKQLVESGAEVEIK. Residues 105 to 117 show a composition bias toward basic and acidic residues; that stretch reads VSKEEAEEAKKQL.

The protein belongs to the bacterial ribosomal protein bL12 family. As to quaternary structure, homodimer. Part of the ribosomal stalk of the 50S ribosomal subunit. Forms a multimeric L10(L12)X complex, where L10 forms an elongated spine to which 2 to 4 L12 dimers bind in a sequential fashion. Binds GTP-bound translation factors.

Forms part of the ribosomal stalk which helps the ribosome interact with GTP-bound translation factors. Is thus essential for accurate translation. The sequence is that of Large ribosomal subunit protein bL12 from Geobacter sulfurreducens (strain ATCC 51573 / DSM 12127 / PCA).